We begin with the raw amino-acid sequence, 336 residues long: Structure-specific endonuclease subunit SLX1 (336 aa).

Positions 21-104 constitute a GIY-YIG domain; sequence SFYGVYLLQS…QHCHETRHIK (84 aa). The interval 37 to 57 is disordered; it reads FYIGSTPDPPRRLRQHNGDLK. The SLX1-type zinc finger occupies 214–290; it reads CALCLEPIEQ…PATVNRCCSC (77 aa).

It belongs to the SLX1 family. Forms a heterodimer with SLX4. A divalent metal cation is required as a cofactor.

It is found in the nucleus. Catalytic subunit of the SLX1-SLX4 structure-specific endonuclease that resolves DNA secondary structures generated during DNA repair and recombination. Has endonuclease activity towards branched DNA substrates, introducing single-strand cuts in duplex DNA close to junctions with ss-DNA. In Scheffersomyces stipitis (strain ATCC 58785 / CBS 6054 / NBRC 10063 / NRRL Y-11545) (Yeast), this protein is Structure-specific endonuclease subunit SLX1.